The sequence spans 449 residues: Chromosomal replication initiator protein DnaA (449 aa).

Positions 1–69 (MEKVWLEAQS…VEAISSLTSV (69 aa)) are domain I, interacts with DnaA modulators. The interval 69–112 (VKYQIEFKITEKIPLESKPVDNFTPVIKDNEPSKETNKNIDITA) is domain II. Positions 113–329 (NLNPKYTFDS…GMLIRLGAYA (217 aa)) are domain III, AAA+ region. 4 residues coordinate ATP: glycine 157, glycine 159, lysine 160, and threonine 161. The domain IV, binds dsDNA stretch occupies residues 330–449 (SLTGSEITLN…VENLKKELIT (120 aa)).

The protein belongs to the DnaA family. Oligomerizes as a right-handed, spiral filament on DNA at oriC.

It localises to the cytoplasm. Functionally, plays an essential role in the initiation and regulation of chromosomal replication. ATP-DnaA binds to the origin of replication (oriC) to initiate formation of the DNA replication initiation complex once per cell cycle. Binds the DnaA box (a 9 base pair repeat at the origin) and separates the double-stranded (ds)DNA. Forms a right-handed helical filament on oriC DNA; dsDNA binds to the exterior of the filament while single-stranded (ss)DNA is stabiized in the filament's interior. The ATP-DnaA-oriC complex binds and stabilizes one strand of the AT-rich DNA unwinding element (DUE), permitting loading of DNA polymerase. After initiation quickly degrades to an ADP-DnaA complex that is not apt for DNA replication. Binds acidic phospholipids. This Geotalea uraniireducens (strain Rf4) (Geobacter uraniireducens) protein is Chromosomal replication initiator protein DnaA.